Consider the following 113-residue polypeptide: T cell receptor alpha variable 13-2 (113 aa).

An N-terminal signal peptide occupies residues 1–21 (MAGIRALFMYLWLQLDWVSRG). Residues 22-113 (ESVGLHLPTL…DSAVYFCAEN (92 aa)) form the Ig-like domain. An intrachain disulfide couples Cys-43 to Cys-110. Residue Asn-87 is glycosylated (N-linked (GlcNAc...) asparagine).

In terms of assembly, alpha-beta TR is a heterodimer composed of an alpha and beta chain; disulfide-linked. The alpha-beta TR is associated with the transmembrane signaling CD3 coreceptor proteins to form the TR-CD3 (TcR or TCR). The assembly of alpha-beta TR heterodimers with CD3 occurs in the endoplasmic reticulum where a single alpha-beta TR heterodimer associates with one CD3D-CD3E heterodimer, one CD3G-CD3E heterodimer and one CD247 homodimer forming a stable octameric structure. CD3D-CD3E and CD3G-CD3E heterodimers preferentially associate with TR alpha and TR beta chains, respectively. The association of the CD247 homodimer is the last step of TcR assembly in the endoplasmic reticulum and is required for transport to the cell surface.

The protein resides in the cell membrane. Its function is as follows. V region of the variable domain of T cell receptor (TR) alpha chain that participates in the antigen recognition. Alpha-beta T cell receptors are antigen specific receptors which are essential to the immune response and are present on the cell surface of T lymphocytes. Recognize peptide-major histocompatibility (MH) (pMH) complexes that are displayed by antigen presenting cells (APC), a prerequisite for efficient T cell adaptive immunity against pathogens. Binding of alpha-beta TR to pMH complex initiates TR-CD3 clustering on the cell surface and intracellular activation of LCK that phosphorylates the ITAM motifs of CD3G, CD3D, CD3E and CD247 enabling the recruitment of ZAP70. In turn ZAP70 phosphorylates LAT, which recruits numerous signaling molecules to form the LAT signalosome. The LAT signalosome propagates signal branching to three major signaling pathways, the calcium, the mitogen-activated protein kinase (MAPK) kinase and the nuclear factor NF-kappa-B (NF-kB) pathways, leading to the mobilization of transcription factors that are critical for gene expression and essential for T cell growth and differentiation. The T cell repertoire is generated in the thymus, by V-(D)-J rearrangement. This repertoire is then shaped by intrathymic selection events to generate a peripheral T cell pool of self-MH restricted, non-autoaggressive T cells. Post-thymic interaction of alpha-beta TR with the pMH complexes shapes TR structural and functional avidity. The protein is T cell receptor alpha variable 13-2 of Homo sapiens (Human).